The following is a 587-amino-acid chain: Prolycopene isomerase 2, chloroplastic (587 aa).

Residues 1–50 constitute a chloroplast transit peptide; it reads MLCLSLNSSSTSPPKLPLHHSFSRRGIRSWVRSPCVQRKKLGFWSSPKAV.

It belongs to the carotenoid/retinoid oxidoreductase family. CrtISO subfamily. NAD(+) is required as a cofactor. The cofactor is NADP(+). FAD serves as cofactor. As to expression, up-regulated in the flower buds and flower lip tissue, while it is weakly expressed in leaves.

The protein localises to the plastid. Its subcellular location is the chloroplast membrane. It catalyses the reaction 7,7',9,9'-tetra-cis-lycopene = all-trans-lycopene. It functions in the pathway carotenoid biosynthesis; lycopene biosynthesis. Carotene cis-trans-isomerase that converts 7,9,9'-tri-cis-neurosporene to 9'-cis-neurosporene and 7,9,9',7'-tetra-cis-lycopene (also known as prolycopene) into all-trans-lycopene. Isomerization requires redox-active components, suggesting that isomerization is achieved by a reversible redox reaction acting at specific double bonds. Isomerizes adjacent cis-double bonds at C7 and C9 pairwise into the trans-configuration, but is incapable of isomerizing single cis-double bonds at C9 and C9'. The protein is Prolycopene isomerase 2, chloroplastic (CRTISO2) of Oncidium hybrid cultivar (Orchid).